The chain runs to 167 residues: Phosphopantetheine adenylyltransferase (167 aa).

Residue Ser11 participates in substrate binding. Residues Ser11–Phe12 and His19 contribute to the ATP site. 3 residues coordinate substrate: Lys43, Thr76, and Arg90. Residues Gly91–Arg93, Glu101, and Tyr126–Thr132 contribute to the ATP site.

The protein belongs to the bacterial CoaD family. Homohexamer. It depends on Mg(2+) as a cofactor.

The protein localises to the cytoplasm. It carries out the reaction (R)-4'-phosphopantetheine + ATP + H(+) = 3'-dephospho-CoA + diphosphate. It functions in the pathway cofactor biosynthesis; coenzyme A biosynthesis; CoA from (R)-pantothenate: step 4/5. Functionally, reversibly transfers an adenylyl group from ATP to 4'-phosphopantetheine, yielding dephospho-CoA (dPCoA) and pyrophosphate. This chain is Phosphopantetheine adenylyltransferase, found in Lacticaseibacillus paracasei (strain ATCC 334 / BCRC 17002 / CCUG 31169 / CIP 107868 / KCTC 3260 / NRRL B-441) (Lactobacillus paracasei).